The sequence spans 50 residues: Small integral membrane protein 46 (50 aa).

The helical transmembrane segment at 15–37 threads the bilayer; sequence TTFQLWLQLLLWAHLAVRFLGYL.

Its subcellular location is the membrane. The chain is Small integral membrane protein 46 from Homo sapiens (Human).